We begin with the raw amino-acid sequence, 223 residues long: ATP-dependent dethiobiotin synthetase BioD (223 aa).

Residue Thr16 coordinates Mg(2+). The active site involves Lys37. Residue Ser41 coordinates substrate. The Mg(2+) site is built by Asp50 and Glu111. Residues Asp50, 111–114 (EGAG), and 171–172 (NR) each bind ATP.

This sequence belongs to the dethiobiotin synthetase family. In terms of assembly, homodimer. Mg(2+) serves as cofactor.

Its subcellular location is the cytoplasm. It carries out the reaction (7R,8S)-7,8-diammoniononanoate + CO2 + ATP = (4R,5S)-dethiobiotin + ADP + phosphate + 3 H(+). It functions in the pathway cofactor biosynthesis; biotin biosynthesis; biotin from 7,8-diaminononanoate: step 1/2. Its function is as follows. Catalyzes a mechanistically unusual reaction, the ATP-dependent insertion of CO2 between the N7 and N8 nitrogen atoms of 7,8-diaminopelargonic acid (DAPA, also called 7,8-diammoniononanoate) to form a ureido ring. The protein is ATP-dependent dethiobiotin synthetase BioD of Anaeromyxobacter dehalogenans (strain 2CP-1 / ATCC BAA-258).